The sequence spans 188 residues: Probable DNA-directed RNA polymerase subunit delta (188 aa).

The HTH HARE-type domain occupies 14-81 (LSMIEVAHAL…GNNVWALRSW (68 aa)). A disordered region spans residues 96–188 (EIEDEEEEEK…EDDSDDTDED (93 aa)). 2 stretches are compositionally biased toward acidic residues: residues 118-150 (IEDE…EDKD) and 158-188 (ELAE…TDED).

This sequence belongs to the RpoE family. As to quaternary structure, RNAP is composed of a core of 2 alpha, a beta and a beta' subunits. The core is associated with a delta subunit and one of several sigma factors.

In terms of biological role, participates in both the initiation and recycling phases of transcription. In the presence of the delta subunit, RNAP displays an increased specificity of transcription, a decreased affinity for nucleic acids, and an increased efficiency of RNA synthesis because of enhanced recycling. The protein is Probable DNA-directed RNA polymerase subunit delta of Lactococcus lactis subsp. cremoris (strain MG1363).